The following is a 552-amino-acid chain: MSQTRKKTSSEGETKPQTSTVNKFLRGSNAESRKEDNDLKTSDSQPSDWIQKTATSETAKPLSSEMEWRSSMEKNEHFLQKLGKKAVNKCLDLNNCGLTTADMKEMVALLPFLPDLEELDISWNGFVGGTLLSITQQMHLVSKLKILRLGSCRLTTDDVQALGEAFEMIPELEELNLSWNSKVGGNLPLILQKFQKGSKIQMIELVDCSLTSEDGTFLGQLLPMLQSLEVLDLSINRDIVGSLNSIAQGLKSTSNLKVLKLHSCGLSQKSVKILDAAFRYLGELRKLDLSCNKDLGGGFEDSPAQLVMLKHLQVLDLHQCSLTADDVMSLTQVIPLLSNLQELDLSANKKMGSSSENLLSRLRFLPALKSLVINNCALESETFTALAEASVHLSALEVFNLSWNKCVGGNLKLLLETLKLSMSLQVLRLSSCSLVTEDVALLASVIQTGHLAKLQKLDLSYNDSICDAGWTMFCQNVRFLKELIELDISLRPSNFRDCGQWFRHLLYAVTKLPQITEIGMKRWILPASQEEELECFDQDKKRSIHFDHGGFQ.

The tract at residues 1-65 (MSQTRKKTSS…SETAKPLSSE (65 aa)) is disordered. The segment covering 31–41 (ESRKEDNDLKT) has biased composition (basic and acidic residues). The segment covering 42–58 (SDSQPSDWIQKTATSET) has biased composition (polar residues). LRR repeat units follow at residues 227–246 (SLEVLDLSINRDIVGSLNSI), 255–275 (NLKVLKLHSCGLSQKSVKILD), 283–293 (ELRKLDLSCNK), 311–331 (HLQVLDLHQCSLTADDVMSLT), 339–360 (NLQELDLSANKKMGSSSENLLS), 367–387 (ALKSLVINNCALESETFTALA), 395–415 (ALEVFNLSWNKCVGGNLKLLL), 423–443 (SLQVLRLSSCSLVTEDVALLA), and 453–475 (KLQKLDLSYNDSICDAGWTMFCQ).

The chain is Leucine-rich repeat-containing protein 31 (LRRC31) from Homo sapiens (Human).